Consider the following 89-residue polypeptide: Small ribosomal subunit protein uS14 (89 aa).

It belongs to the universal ribosomal protein uS14 family. Part of the 30S ribosomal subunit. Contacts proteins S3 and S10.

Its function is as follows. Binds 16S rRNA, required for the assembly of 30S particles and may also be responsible for determining the conformation of the 16S rRNA at the A site. The sequence is that of Small ribosomal subunit protein uS14 from Chlorobium luteolum (strain DSM 273 / BCRC 81028 / 2530) (Pelodictyon luteolum).